A 372-amino-acid chain; its full sequence is Serine/threonine-protein kinase 17B (372 aa).

The Protein kinase domain occupies 33-293 (ILTSKELGRG…AEICLSHSWL (261 aa)). Residues 39–47 (LGRGKFAVV) and Lys-62 contribute to the ATP site. Residue Asp-158 is the Proton acceptor of the active site. A disordered region spans residues 305-362 (EETSSSSQTQDHSVRSSEDKTSKSSCNGTCGDREDKENIPEDSSMVSKRFRFDDSLPN). The segment covering 316–326 (HSVRSSEDKTS) has biased composition (basic and acidic residues).

It belongs to the protein kinase superfamily. CAMK Ser/Thr protein kinase family. DAP kinase subfamily. Interacts with CHP1; the interaction induces CHP1 to translocate from the Golgi to the nucleus. Autophosphorylated. In terms of tissue distribution, highly expressed in placenta, lung, pancreas. Lower levels in heart, brain, liver, skeletal muscle and kidney.

It localises to the nucleus. The protein resides in the cell membrane. Its subcellular location is the endoplasmic reticulum-Golgi intermediate compartment. The enzyme catalyses L-seryl-[protein] + ATP = O-phospho-L-seryl-[protein] + ADP + H(+). It carries out the reaction L-threonyl-[protein] + ATP = O-phospho-L-threonyl-[protein] + ADP + H(+). Its function is as follows. Phosphorylates myosin light chains. Acts as a positive regulator of apoptosis. The polypeptide is Serine/threonine-protein kinase 17B (STK17B) (Homo sapiens (Human)).